The following is a 476-amino-acid chain: mRNA cap guanine-N(7) methyltransferase (476 aa).

The span at 1 to 14 shows a compositional bias: basic and acidic residues; sequence MANSTKAEEYEKMS. The interval 1 to 128 is disordered; the sequence is MANSTKAEEY…TGDGTQNKRK (128 aa). Positions 20 to 50 are enriched in polar residues; it reads ASVNSEAESSFSINENTTASGTGLSGKTSVC. Phosphoserine is present on residues S24, S28, and S29. Composition is skewed to basic and acidic residues over residues 54 to 68, 84 to 93, and 107 to 117; these read DTAR…DLVK, LDPEIVPEEK, and RETEDVPKDEY. A Phosphoserine modification is found at S118. A Nuclear localization signal motif is present at residues 126–128; that stretch reads KRK. Residues 167–475 form the mRNA cap 0 methyltransferase domain; it reads SRIFYLRNFN…IYLVFAFEKQ (309 aa). Residue 176 to 177 coordinates mRNA; the sequence is NN. K180, G205, D227, D261, Q284, and Y289 together coordinate S-adenosyl-L-methionine.

Belongs to the class I-like SAM-binding methyltransferase superfamily. mRNA cap 0 methyltransferase family. Interacts with importin alpha, leading to stimulate both RNA-binding and methyltransferase activity. Interaction with importin alpha and beta is required for its nuclear localization, importin beta dissociating in response to RanGTP, allowing RNMT-importin alpha to bind RNA substrates. Interacts with elongating form of polymerase II and RNGTT. Interacts with RAMAC, this interaction significantly enhances RNA-binding and cap methyltransferase activity.

It localises to the nucleus. The catalysed reaction is a 5'-end (5'-triphosphoguanosine)-ribonucleoside in mRNA + S-adenosyl-L-methionine = a 5'-end (N(7)-methyl 5'-triphosphoguanosine)-ribonucleoside in mRNA + S-adenosyl-L-homocysteine. With respect to regulation, methyltransferase activity is activated by RAMAC. In terms of biological role, catalytic subunit of the mRNA-capping methyltransferase RNMT:RAMAC complex that methylates the N7 position of the added guanosine to the 5'-cap structure of mRNAs. Binds RNA containing 5'-terminal GpppC. This chain is mRNA cap guanine-N(7) methyltransferase (RNMT), found in Macaca fascicularis (Crab-eating macaque).